The primary structure comprises 302 residues: Protein FdhE homolog (302 aa).

It belongs to the FdhE family.

It localises to the cytoplasm. Necessary for formate dehydrogenase activity. This Shewanella sp. (strain MR-4) protein is Protein FdhE homolog.